The sequence spans 279 residues: MTARMDKRFAELKAEGRPALVTYFMGGDPDYDTSLGIMKALPEAGSDIIELGMPFSDPMADGPAIQLAGQRALKGGQTLKKTLQLAADFRKTNDLTPIVMMGYYNPIYIYGVEKFLDDALAAGIDGLIVVDLPPEMDDELCIPAIRKGINFIRLATPTTDEKRLPTVLKNTSGFVYYVSMNGITGSALPDPSLVSGAVQRIKQHTELPVCVGFGVKTAEHAKVIGGSADGVVVGTAIVNQVATSLTKDGKATPDTVQAVATLVRGLSSGARSARLVAAE.

Residues glutamate 50 and aspartate 61 each act as proton acceptor in the active site.

This sequence belongs to the TrpA family. In terms of assembly, tetramer of two alpha and two beta chains.

It catalyses the reaction (1S,2R)-1-C-(indol-3-yl)glycerol 3-phosphate + L-serine = D-glyceraldehyde 3-phosphate + L-tryptophan + H2O. It functions in the pathway amino-acid biosynthesis; L-tryptophan biosynthesis; L-tryptophan from chorismate: step 5/5. Functionally, the alpha subunit is responsible for the aldol cleavage of indoleglycerol phosphate to indole and glyceraldehyde 3-phosphate. In Rhizobium etli (strain ATCC 51251 / DSM 11541 / JCM 21823 / NBRC 15573 / CFN 42), this protein is Tryptophan synthase alpha chain.